The sequence spans 309 residues: Olfactory receptor 5B2 (309 aa).

Residues 1 to 23 (MENCTEVTKFILLGLTSVPELQI) lie on the Extracellular side of the membrane. N-linked (GlcNAc...) asparagine glycosylation occurs at Asn-3. The helical transmembrane segment at 24–47 (PLFILFTFIYLLTLCGNLGMMLLI) threads the bilayer. Residues 48-55 (LMDSCLHT) are Cytoplasmic-facing. Residues 56–77 (PMYFFLSNLSLVDFGYSSAVTP) traverse the membrane as a helical segment. Topologically, residues 78 to 98 (KVMAGFLRGDKVISYNACAVQ) are extracellular. Cys-95 and Cys-187 are disulfide-bonded. The helical transmembrane segment at 99-118 (MFFFVALATVENYLLASMAY) threads the bilayer. Residues 119–137 (DRYAAVCKPLHYTTTMTAS) lie on the Cytoplasmic side of the membrane. A helical transmembrane segment spans residues 138–156 (VGACLALGSYVCGFLNASF). Topologically, residues 157 to 193 (HIGGIFSLSFCKSNLVHHFFCDVPAVMALSCSDKHTS) are extracellular. A helical transmembrane segment spans residues 194 to 217 (EVILVFMSSFNIFFVLLVIFISYL). At 218 to 234 (FIFITILKMHSAKGHQK) the chain is on the cytoplasmic side. A helical transmembrane segment spans residues 235–257 (ALSTCASHFTAVSVFYGTVIFIY). The Extracellular segment spans residues 258 to 270 (LQPSSSHSMDTDK). The helical transmembrane segment at 271–290 (MASVFYAMIIPMLNPVVYSL) threads the bilayer. Over 291–309 (RNREVQNAFKKVLRRQKFL) the chain is Cytoplasmic.

Belongs to the G-protein coupled receptor 1 family.

The protein resides in the cell membrane. Functionally, odorant receptor. This chain is Olfactory receptor 5B2 (OR5B2), found in Homo sapiens (Human).